We begin with the raw amino-acid sequence, 101 residues long: Large ribosomal subunit protein bL21 (101 aa).

The protein belongs to the bacterial ribosomal protein bL21 family. Part of the 50S ribosomal subunit. Contacts protein L20.

In terms of biological role, this protein binds to 23S rRNA in the presence of protein L20. In Beutenbergia cavernae (strain ATCC BAA-8 / DSM 12333 / CCUG 43141 / JCM 11478 / NBRC 16432 / NCIMB 13614 / HKI 0122), this protein is Large ribosomal subunit protein bL21.